Consider the following 145-residue polypeptide: MSTAGGGRRCQAQVSRRISFSASHRLYSKFLSDEENLKLFGKCSNPNGHGHNYKVVVTVHGEIDPATGMVMNLADLKKYMEEAIMQPLDHKNLDMDVPYFADVVSTTENVAVYIWDNLQKVLPVGVLYKVKLYETDNNIVVYKGE.

A Phosphoserine modification is found at Ser19. Zn(2+) is bound at residue His24. Ser28 bears the Phosphoserine mark. Residue Cys43 is the Proton acceptor of the active site. His49 and His51 together coordinate Zn(2+). Catalysis depends on His90, which acts as the Charge relay system. A Phosphotyrosine modification is found at Tyr128. Glu134 (charge relay system) is an active-site residue.

The protein belongs to the PTPS family. In terms of assembly, homohexamer formed of two homotrimers in a head to head fashion. Zn(2+) serves as cofactor. In terms of processing, phosphorylation of Ser-19 is required for maximal enzyme activity.

It catalyses the reaction 7,8-dihydroneopterin 3'-triphosphate = 6-pyruvoyl-5,6,7,8-tetrahydropterin + triphosphate + H(+). Its pathway is cofactor biosynthesis; tetrahydrobiopterin biosynthesis; tetrahydrobiopterin from 7,8-dihydroneopterin triphosphate: step 1/3. Its function is as follows. Involved in the biosynthesis of tetrahydrobiopterin, an essential cofactor of aromatic amino acid hydroxylases. Catalyzes the transformation of 7,8-dihydroneopterin triphosphate into 6-pyruvoyl tetrahydropterin. The chain is 6-pyruvoyl tetrahydrobiopterin synthase (PTS) from Pongo abelii (Sumatran orangutan).